A 328-amino-acid chain; its full sequence is Homeobox protein DLX-2 (328 aa).

Polar residues-rich tracts occupy residues 16–28 (QIAA…QHQQ) and 52–72 (ESPT…NQQH). 3 disordered regions span residues 16 to 81 (QIAA…GGGG), 211 to 270 (WKSG…SSPS), and 300 to 328 (LHPT…GTIF). The segment at residues 152–211 (VRKPRTIYSSFQLAALQRRFQKTQYLALPERAELAASLGLTQTQVKIWFQNRRSKFKKMW) is a DNA-binding region (homeobox). A Phosphoserine modification is found at S232. The segment covering 250–264 (AGGGGPGSGGSGAGS) has biased composition (gly residues).

The protein belongs to the distal-less homeobox family. Interacts (via homeobox DNA-binding domain) with POU4F2; this interaction enhances retinal ganglion cell (RGC) differentiation.

It is found in the nucleus. Functionally, acts as a transcriptional activator. Activates transcription of CGA/alpha-GSU, via binding to the downstream activin regulatory element (DARE) in the gene promoter. Plays a role in terminal differentiation of interneurons, such as amacrine and bipolar cells in the developing retina. Likely to play a regulatory role in the development of the ventral forebrain. May play a role in craniofacial patterning and morphogenesis. The protein is Homeobox protein DLX-2 (DLX2) of Homo sapiens (Human).